Here is a 634-residue protein sequence, read N- to C-terminus: Chaperone protein HtpG (634 aa).

The a; substrate-binding stretch occupies residues 1–342; it reads MSVETQKETL…SNDLSLNVSR (342 aa). A b region spans residues 343 to 559; sequence EILQKDPVID…EQDLGLQMRQ (217 aa). The c stretch occupies residues 560 to 634; the sequence is ILEASGQKVP…LNKLLVELSA (75 aa).

The protein belongs to the heat shock protein 90 family. In terms of assembly, homodimer.

It is found in the cytoplasm. Molecular chaperone. Has ATPase activity. The polypeptide is Chaperone protein HtpG (Pseudomonas paraeruginosa (strain DSM 24068 / PA7) (Pseudomonas aeruginosa (strain PA7))).